Here is a 205-residue protein sequence, read N- to C-terminus: CASP-like protein 3A1 (205 aa).

Residues 1 to 39 (MGIGMDSSTMSGPLVAHSGILDGDYEKRPAVCKMQMRFD) are Cytoplasmic-facing. A helical membrane pass occupies residues 40–60 (LANVGLRVLSLACSLVALVSM). The Extracellular portion of the chain corresponds to 61–89 (ASNQESGVVTVFGFKLPVYSKWSYSDSFE). The chain crosses the membrane as a helical span at residues 90 to 110 (FLVGASAAAAAHSLLQLLLCG). Residues 111–125 (MKMVKRASTIPSRNH) lie on the Cytoplasmic side of the membrane. A helical membrane pass occupies residues 126 to 146 (AWLLFAGDQVFAYGMLAAASA). Topologically, residues 147–176 (AAGVTNLNRTGFRHSDLPNFCKPLHRFCDK) are extracellular. A glycan (N-linked (GlcNAc...) asparagine) is linked at asparagine 154. Residues 177 to 197 (AAISIVFAFISSLILGGSAVL) form a helical membrane-spanning segment. Residues 198–205 (DVFWLSKN) lie on the Cytoplasmic side of the membrane.

Belongs to the Casparian strip membrane proteins (CASP) family. As to quaternary structure, homodimer and heterodimers.

Its subcellular location is the cell membrane. This is CASP-like protein 3A1 from Picea sitchensis (Sitka spruce).